The primary structure comprises 631 residues: Glutamine--fructose-6-phosphate aminotransferase [isomerizing] (631 aa).

The active-site Nucleophile; for GATase activity is Cys-2. A Glutamine amidotransferase type-2 domain is found at 2–225 (CGIVGYIGTQ…NGEIARLTPL (224 aa)). 2 consecutive SIS domains span residues 298–446 (LDPQ…QRHS) and 480–621 (LAHE…VDQP). Lys-626 acts as the For Fru-6P isomerization activity in catalysis.

In terms of assembly, homodimer.

It is found in the cytoplasm. The catalysed reaction is D-fructose 6-phosphate + L-glutamine = D-glucosamine 6-phosphate + L-glutamate. Catalyzes the first step in hexosamine metabolism, converting fructose-6P into glucosamine-6P using glutamine as a nitrogen source. In Synechocystis sp. (strain ATCC 27184 / PCC 6803 / Kazusa), this protein is Glutamine--fructose-6-phosphate aminotransferase [isomerizing].